We begin with the raw amino-acid sequence, 380 residues long: tRNA-specific 2-thiouridylase MnmA (380 aa).

ATP is bound by residues 11-18 and methionine 37; that span reads GMSGGVDS. Positions 92-94 are interaction with target base in tRNA; that stretch reads NPD. Cysteine 97 (nucleophile) is an active-site residue. A disulfide bond links cysteine 97 and cysteine 197. Glycine 121 contacts ATP. Positions 147–149 are interaction with tRNA; sequence KDQ. Cysteine 197 acts as the Cysteine persulfide intermediate in catalysis. The segment at 331-332 is interaction with tRNA; the sequence is RY.

It belongs to the MnmA/TRMU family.

It localises to the cytoplasm. It carries out the reaction S-sulfanyl-L-cysteinyl-[protein] + uridine(34) in tRNA + AH2 + ATP = 2-thiouridine(34) in tRNA + L-cysteinyl-[protein] + A + AMP + diphosphate + H(+). In terms of biological role, catalyzes the 2-thiolation of uridine at the wobble position (U34) of tRNA, leading to the formation of s(2)U34. This chain is tRNA-specific 2-thiouridylase MnmA, found in Karelsulcia muelleri (strain GWSS) (Sulcia muelleri).